Here is a 169-residue protein sequence, read N- to C-terminus: Nucleoside diphosphate kinase 3-A (169 aa).

Positions 29, 105, 111, 122, 129, and 132 each coordinate ADP. Residue His-135 is the Pros-phosphohistidine intermediate of the active site.

Belongs to the NDK family. In terms of assembly, homohexamer. Requires Mg(2+) as cofactor.

The protein resides in the mitochondrion outer membrane. Its subcellular location is the cytoplasm. It localises to the cytoskeleton. The protein localises to the cilium basal body. The catalysed reaction is a 2'-deoxyribonucleoside 5'-diphosphate + ATP = a 2'-deoxyribonucleoside 5'-triphosphate + ADP. It catalyses the reaction a ribonucleoside 5'-diphosphate + ATP = a ribonucleoside 5'-triphosphate + ADP. In terms of biological role, catalyzes the phosphorylation of ribonucleosides and deoxyribonucleoside diphosphates, other than ATP, into the corresponding triphosphates with ATP as the major phosphate donor. The ATP gamma phosphate is transferred to the nucleoside diphosphate beta phosphate via a ping-pong mechanism, using a phosphorylated active-site intermediate. Through the catalyzed exchange of gamma-phosphate between di- and triphosphonucleosides participates in regulation of intracellular nucleotide homeostasis. Required for ciliary function during renal development. Independently of its kinase activity, facilitates mitochondrial tethering prior to membrane fusion through its direct membrane-binding and hexamerization. Implicated in repair of both single- and double-stranded breaks in DNA, independently of its kinase activity. In Xenopus laevis (African clawed frog), this protein is Nucleoside diphosphate kinase 3-A.